The following is a 238-amino-acid chain: Cysteine-rich venom protein pseudechetoxin-like (238 aa).

Residues 1–19 (MIAFIVLLSLAAVLQQSSG) form the signal peptide. Residues 20–28 (TVDFASESS) constitute a propeptide that is removed on maturation. The SCP domain maps to 38-164 (VDKHNALRRS…STKYLYVCQY (127 aa)). 8 cysteine pairs are disulfide-bonded: Cys-75–Cys-153, Cys-92–Cys-165, Cys-148–Cys-162, Cys-184–Cys-191, Cys-187–Cys-196, Cys-200–Cys-233, Cys-209–Cys-227, and Cys-218–Cys-231. The 34-residue stretch at 200-233 (CKHEDDFSNCKALAKNSKCQTAWIKSKCPATCFC) folds into the ShKT domain.

The protein belongs to the CRISP family. In terms of tissue distribution, expressed by the venom gland.

The protein localises to the secreted. In terms of biological role, blocks olfactory (CNGA2) and retinal (CNGA1) CNG channel currents. Does not affect neither depolarization- nor caffeine-induced contraction of smooth muscle. In Hoplocephalus stephensii (Stephens's banded snake), this protein is Cysteine-rich venom protein pseudechetoxin-like.